Consider the following 274-residue polypeptide: 3-methyl-2-oxobutanoate hydroxymethyltransferase (274 aa).

Mg(2+) is bound by residues aspartate 46 and aspartate 85. Residues 46 to 47 (DS), aspartate 85, and lysine 115 contribute to the 3-methyl-2-oxobutanoate site. Position 117 (glutamate 117) interacts with Mg(2+). The active-site Proton acceptor is glutamate 184.

It belongs to the PanB family. In terms of assembly, homodecamer; pentamer of dimers. Mg(2+) is required as a cofactor.

The protein localises to the cytoplasm. The catalysed reaction is 3-methyl-2-oxobutanoate + (6R)-5,10-methylene-5,6,7,8-tetrahydrofolate + H2O = 2-dehydropantoate + (6S)-5,6,7,8-tetrahydrofolate. It functions in the pathway cofactor biosynthesis; coenzyme A biosynthesis. Functionally, catalyzes the reversible reaction in which hydroxymethyl group from 5,10-methylenetetrahydrofolate is transferred onto alpha-ketoisovalerate to form ketopantoate. This Halobacterium salinarum (strain ATCC 29341 / DSM 671 / R1) protein is 3-methyl-2-oxobutanoate hydroxymethyltransferase.